The sequence spans 421 residues: Ankyrin repeat and SOCS box protein 6 (421 aa).

ANK repeat units lie at residues 67–97 (EGVS…NLNF), 102–131 (TYYT…DINR), 136–166 (HESS…DVNA), 170–205 (HGKT…DVKA), 226–255 (GGDK…DPSE), and 260–289 (ESLT…AYNC). The SOCS box domain maps to 360–415 (ALHFSLRQLESYPPPLKHLCRVAIRLYLQPWPVDVKVKALPLPDRLKWYLLSEHSG).

This sequence belongs to the ankyrin SOCS box (ASB) family. Binds APS. Identified in a complex with ELOB and ELOC. Interacts with CUL5 and RNF7. Interacts with SQSTM1.

The protein localises to the cytoplasm. It functions in the pathway protein modification; protein ubiquitination. Functionally, probable substrate-recognition component of a SCF-like ECS (Elongin-Cullin-SOCS-box protein) E3 ubiquitin-protein ligase complex which mediates the ubiquitination and subsequent proteasomal degradation of target proteins. May play a role in the regulation of cell proliferation and autophagy by promoting the ubiquitination and degradation of SQSTM1. The protein is Ankyrin repeat and SOCS box protein 6 (ASB6) of Pongo abelii (Sumatran orangutan).